We begin with the raw amino-acid sequence, 644 residues long: Exoribonuclease 2 (644 aa).

The 328-residue stretch at 189–516 (RQDLTALNFV…NHRLLKAVIK (328 aa)) folds into the RNB domain. The S1 motif domain occupies 561-643 (NTRFAAEIID…ETRSIIARPA (83 aa)).

This sequence belongs to the RNR ribonuclease family. RNase II subfamily.

The protein localises to the cytoplasm. It carries out the reaction Exonucleolytic cleavage in the 3'- to 5'-direction to yield nucleoside 5'-phosphates.. Its function is as follows. Involved in mRNA degradation. Hydrolyzes single-stranded polyribonucleotides processively in the 3' to 5' direction. This Salmonella enteritidis PT4 (strain P125109) protein is Exoribonuclease 2.